The sequence spans 114 residues: uncharacterized protein (114 aa).

The 109-residue stretch at 6-114 (IFKNIIQRKI…LGGKKLKSFS (109 aa)) folds into the HIT domain.

This is an uncharacterized protein from Buchnera aphidicola subsp. Acyrthosiphon pisum (strain APS) (Acyrthosiphon pisum symbiotic bacterium).